The sequence spans 331 residues: MRNSIFEQEETFQDLSLRPKSIEKFVGQQRVVENLQVFIDSAQKRNDSLDHVLFCGPPGLGKTTLAHIISNELESRIHTTAGPLLSKAGDIAAILTNLHKNDILFIDEIHRLPSAVEEVLYPAMEDYHLDLIVGDGPAAKSIRINLAKFTLVAATTRIGMLSNPLRDRFGITLRLDFYTVSELLQLLQQAAERLSVNIENGAMIELAKRSRGTPRIALRLLKRVRDFLEVSDSDVITREFADLALNKMEVDQFGLDKLDYTYMDFIAKNYSDNPVGIKTIAAAISEKEDSIEELIEPYLIKIGFLSRTQRGRRLTGKALDYLSTINSARLP.

The segment at 1 to 178 is large ATPase domain (RuvB-L); that stretch reads MRNSIFEQEE…FGITLRLDFY (178 aa). ATP-binding positions include leucine 17, arginine 18, glycine 59, lysine 62, threonine 63, threonine 64, 125–127, arginine 168, tyrosine 178, and arginine 215; that span reads EDY. Position 63 (threonine 63) interacts with Mg(2+). Residues 179-249 form a small ATPAse domain (RuvB-S) region; the sequence is TVSELLQLLQ…FADLALNKME (71 aa). A head domain (RuvB-H) region spans residues 252–331; sequence QFGLDKLDYT…LSTINSARLP (80 aa). 2 residues coordinate DNA: arginine 307 and arginine 312.

This sequence belongs to the RuvB family. Homohexamer. Forms an RuvA(8)-RuvB(12)-Holliday junction (HJ) complex. HJ DNA is sandwiched between 2 RuvA tetramers; dsDNA enters through RuvA and exits via RuvB. An RuvB hexamer assembles on each DNA strand where it exits the tetramer. Each RuvB hexamer is contacted by two RuvA subunits (via domain III) on 2 adjacent RuvB subunits; this complex drives branch migration. In the full resolvosome a probable DNA-RuvA(4)-RuvB(12)-RuvC(2) complex forms which resolves the HJ.

It is found in the cytoplasm. It catalyses the reaction ATP + H2O = ADP + phosphate + H(+). Functionally, the RuvA-RuvB-RuvC complex processes Holliday junction (HJ) DNA during genetic recombination and DNA repair, while the RuvA-RuvB complex plays an important role in the rescue of blocked DNA replication forks via replication fork reversal (RFR). RuvA specifically binds to HJ cruciform DNA, conferring on it an open structure. The RuvB hexamer acts as an ATP-dependent pump, pulling dsDNA into and through the RuvAB complex. RuvB forms 2 homohexamers on either side of HJ DNA bound by 1 or 2 RuvA tetramers; 4 subunits per hexamer contact DNA at a time. Coordinated motions by a converter formed by DNA-disengaged RuvB subunits stimulates ATP hydrolysis and nucleotide exchange. Immobilization of the converter enables RuvB to convert the ATP-contained energy into a lever motion, pulling 2 nucleotides of DNA out of the RuvA tetramer per ATP hydrolyzed, thus driving DNA branch migration. The RuvB motors rotate together with the DNA substrate, which together with the progressing nucleotide cycle form the mechanistic basis for DNA recombination by continuous HJ branch migration. Branch migration allows RuvC to scan DNA until it finds its consensus sequence, where it cleaves and resolves cruciform DNA. The polypeptide is Holliday junction branch migration complex subunit RuvB (Neorickettsia sennetsu (strain ATCC VR-367 / Miyayama) (Ehrlichia sennetsu)).